Consider the following 476-residue polypeptide: Probable cytosolic Fe-S cluster assembly factor GF22738 (476 aa).

The [4Fe-4S] cluster site is built by Cys23, Cys68, Cys71, Cys74, Cys187, Cys243, Cys395, and Cys399.

It belongs to the NARF family.

Component of the cytosolic iron-sulfur (Fe/S) protein assembly machinery. Required for maturation of extramitochondrial Fe/S proteins. In Drosophila ananassae (Fruit fly), this protein is Probable cytosolic Fe-S cluster assembly factor GF22738.